The following is a 529-amino-acid chain: HTH-type transcriptional activator Btr (529 aa).

A DNA-binding region (H-T-H motif) is located at residues 182–201; that stretch reads LAQLSQMAGISAKHYSESFK. The Fe/B12 periplasmic-binding domain occupies 268–528; sequence KIAAYGRGTM…QTVSLLSGDC (261 aa).

Binds with high affinity to both apo-bacillibactin and iron-bacillibactin.

It localises to the cytoplasm. In terms of biological role, in iron-limited conditions, activates expression of the feuABCybbA operon, which encodes the bacillibactin uptake system. Acts by binding directly to a conserved direct repeat element upstream of the feuA promoter. Activity is increased in the presence of bacillibactin. This chain is HTH-type transcriptional activator Btr (btr), found in Bacillus subtilis (strain 168).